Consider the following 259-residue polypeptide: MLHIIENLLDTAQLSQLTSILTHQHAQWQDGKLTAGISAQQQKNNWQLSRQDPSYQAMANLCLEALQQHPVFMSAALPKVIMPPLFSAYQLGQGYGMHVDNALQTHPDSKQLMRTDLSLTLFLNNPADYEGGELVISDEYGEHSIKLSAGDAVLYPSTSLHRVNTVTSGQRLAMVTWVQSLVRSDEQRQILHDLDVSHILLRQKLLATSDQAQSTQAQSTQAQCGQLSEQHSTDQQLTHQAIEKLNQSYHNLLRLWAES.

Positions 80 to 180 (VIMPPLFSAY…RLAMVTWVQS (101 aa)) constitute a Fe2OG dioxygenase domain. Residues H98, D100, and H161 each contribute to the Fe cation site. Residue R171 coordinates 2-oxoglutarate.

It depends on Fe(2+) as a cofactor. L-ascorbate serves as cofactor.

The sequence is that of PKHD-type hydroxylase PsycPRwf_1523 from Psychrobacter sp. (strain PRwf-1).